We begin with the raw amino-acid sequence, 207 residues long: Large ribosomal subunit protein uL4 (207 aa).

Residues 53 to 76 (NRSAVRGGGRKPWRQKGTGRARQG) are disordered. The segment covering 60-71 (GGRKPWRQKGTG) has biased composition (basic residues).

Belongs to the universal ribosomal protein uL4 family. Part of the 50S ribosomal subunit.

Functionally, one of the primary rRNA binding proteins, this protein initially binds near the 5'-end of the 23S rRNA. It is important during the early stages of 50S assembly. It makes multiple contacts with different domains of the 23S rRNA in the assembled 50S subunit and ribosome. Its function is as follows. Forms part of the polypeptide exit tunnel. In Staphylococcus saprophyticus subsp. saprophyticus (strain ATCC 15305 / DSM 20229 / NCIMB 8711 / NCTC 7292 / S-41), this protein is Large ribosomal subunit protein uL4.